Reading from the N-terminus, the 358-residue chain is Nicotinate-nucleotide--dimethylbenzimidazole phosphoribosyltransferase (358 aa).

Glu-313 functions as the Proton acceptor in the catalytic mechanism.

The protein belongs to the CobT family.

The catalysed reaction is 5,6-dimethylbenzimidazole + nicotinate beta-D-ribonucleotide = alpha-ribazole 5'-phosphate + nicotinate + H(+). The protein operates within nucleoside biosynthesis; alpha-ribazole biosynthesis; alpha-ribazole from 5,6-dimethylbenzimidazole: step 1/2. Its function is as follows. Catalyzes the synthesis of alpha-ribazole-5'-phosphate from nicotinate mononucleotide (NAMN) and 5,6-dimethylbenzimidazole (DMB). This chain is Nicotinate-nucleotide--dimethylbenzimidazole phosphoribosyltransferase, found in Corynebacterium glutamicum (strain R).